The primary structure comprises 421 residues: WD repeat and SOCS box-containing protein 1 (421 aa).

6 WD repeats span residues 32–71, 124–165, 168–208, 212–251, 254–293, and 309–346; these read KCGR…QNFL, SRCV…LLLN, DHTE…NMMK, GHQN…MIRK, GHHH…ILME, and ANDR…DYPV. Positions 372–421 constitute an SOCS box domain; it reads DGSVYFWATPRQVPSLQHLCRMSIRRVMPTQEVQELPIPSKLLEFLSYRI.

Interacts with DIO2. Component of the probable ECS(WSB1) E3 ubiquitin ligase complex which contains CUL5, RNF7/RBX2, Elongin BC complex and WSB1. Component of a probable ECS-like E3 ubiquitin-protein ligase complex which contains CUL5, RBX1, Elongin BC complex and WSB1. Interacts with CUL5, RNF7, ELOB and ELOC. Binds to HIPK2 through WD40 repeats.

It participates in protein modification; protein ubiquitination. Probable substrate-recognition component of a SCF-like ECS (Elongin-Cullin-SOCS-box protein) E3 ubiquitin ligase complex which mediates the ubiquitination and subsequent proteasomal degradation of target proteins. Recognizes type II iodothyronine deiodinase/DIO2. Confers constitutive instability to HIPK2 through proteasomal degradation. This is WD repeat and SOCS box-containing protein 1 (WSB1) from Homo sapiens (Human).